Reading from the N-terminus, the 380-residue chain is tRNA-specific 2-thiouridylase MnmA (380 aa).

ATP contacts are provided by residues Ala-25 to Ser-32 and Met-51. Cys-119 acts as the Nucleophile in catalysis. Residues Cys-119 and Cys-216 are joined by a disulfide bond. An ATP-binding site is contributed by Gly-143. The interval Lys-166 to Gln-168 is interaction with tRNA. Catalysis depends on Cys-216, which acts as the Cysteine persulfide intermediate. Residues Arg-320–Tyr-321 form an interaction with tRNA region.

This sequence belongs to the MnmA/TRMU family.

Its subcellular location is the cytoplasm. It catalyses the reaction S-sulfanyl-L-cysteinyl-[protein] + uridine(34) in tRNA + AH2 + ATP = 2-thiouridine(34) in tRNA + L-cysteinyl-[protein] + A + AMP + diphosphate + H(+). Its function is as follows. Catalyzes the 2-thiolation of uridine at the wobble position (U34) of tRNA, leading to the formation of s(2)U34. This chain is tRNA-specific 2-thiouridylase MnmA, found in Deinococcus radiodurans (strain ATCC 13939 / DSM 20539 / JCM 16871 / CCUG 27074 / LMG 4051 / NBRC 15346 / NCIMB 9279 / VKM B-1422 / R1).